We begin with the raw amino-acid sequence, 173 residues long: Regulator of ribonuclease activity A (173 aa).

The protein belongs to the RraA family. In terms of assembly, homotrimer. Binds to both RNA-binding sites in the C-terminal region of Rne and to RhlB.

It localises to the cytoplasm. Its function is as follows. Globally modulates RNA abundance by binding to RNase E (Rne) and regulating its endonucleolytic activity. Can modulate Rne action in a substrate-dependent manner by altering the composition of the degradosome. Modulates RNA-binding and helicase activities of the degradosome. The chain is Regulator of ribonuclease activity A from Vibrio vulnificus (strain CMCP6).